The primary structure comprises 393 residues: MTNSNRIKLTWISFLSYALTGALVIVTGMVMGNIADYFHLPVSSMSNTFTFLNAGILISIFLNAWLMEIIPLKTQLRFGFILMVLAVAGLMFSHSLALFSAAMFVLGLVSGITMSIGTFLITQLYEGRQRGSRLLFTDSFFSMAGMIFPMVAAFLLARSIEWYWVYACIGLVYLAIFILTFGCEFPALGKHAQHSQAPVVKEKWGIGVLFLAVAALCYILGQLGFISWVPEYAKGLGMSLNDAGALVSDFWMSYMFGMWAFSFILRFFDLQRILTVLAGMAAVLMYLFITGTQAHMPWFILTLGFFSSAIYTSIITLGSQQTKVASPKLVNFILTCGTIGTMLTFVVTGPIVAHSGPQAALLTANGLYAVVFVMCFALGFVSRHRQHSSPAAH.

12 helical membrane passes run 11 to 31 (WISF…GMVM), 51 to 71 (FLNA…EIIP), 78 to 98 (FGFI…SLAL), 101 to 121 (AAMF…TFLI), 134 to 154 (LLFT…VAAF), 162 to 182 (WYWV…LTFG), 206 to 226 (IGVL…LGFI), 245 to 265 (ALVS…SFIL), 273 to 293 (ILTV…TGTQ), 298 to 318 (WFIL…ITLG), 332 to 352 (FILT…GPIV), and 361 to 381 (LLTA…LGFV).

This sequence belongs to the major facilitator superfamily. TsgA family.

It localises to the cell inner membrane. This chain is Protein TsgA, found in Salmonella paratyphi B (strain ATCC BAA-1250 / SPB7).